We begin with the raw amino-acid sequence, 136 residues long: Nucleoside diphosphate kinase (136 aa).

Positions 10, 58, 86, 92, 104, and 114 each coordinate ATP. Histidine 117 serves as the catalytic Pros-phosphohistidine intermediate.

The protein belongs to the NDK family. Homohexamer. Mg(2+) serves as cofactor.

The protein resides in the cytoplasm. The enzyme catalyses a 2'-deoxyribonucleoside 5'-diphosphate + ATP = a 2'-deoxyribonucleoside 5'-triphosphate + ADP. The catalysed reaction is a ribonucleoside 5'-diphosphate + ATP = a ribonucleoside 5'-triphosphate + ADP. Functionally, major role in the synthesis of nucleoside triphosphates other than ATP. The ATP gamma phosphate is transferred to the NDP beta phosphate via a ping-pong mechanism, using a phosphorylated active-site intermediate. The protein is Nucleoside diphosphate kinase of Mycobacterium bovis (strain ATCC BAA-935 / AF2122/97).